Here is a 1503-residue protein sequence, read N- to C-terminus: DNA-directed RNA polymerase subunit beta' (1503 aa).

Positions 71, 73, 86, and 89 each coordinate Zn(2+). Mg(2+) contacts are provided by Asp470, Asp472, and Asp474. Zn(2+) contacts are provided by Cys800, Cys874, Cys881, and Cys884.

The protein belongs to the RNA polymerase beta' chain family. As to quaternary structure, the RNAP catalytic core consists of 2 alpha, 1 beta, 1 beta' and 1 omega subunit. When a sigma factor is associated with the core the holoenzyme is formed, which can initiate transcription. It depends on Mg(2+) as a cofactor. Zn(2+) is required as a cofactor.

It carries out the reaction RNA(n) + a ribonucleoside 5'-triphosphate = RNA(n+1) + diphosphate. Functionally, DNA-dependent RNA polymerase catalyzes the transcription of DNA into RNA using the four ribonucleoside triphosphates as substrates. This chain is DNA-directed RNA polymerase subunit beta', found in Sulfurimonas denitrificans (strain ATCC 33889 / DSM 1251) (Thiomicrospira denitrificans (strain ATCC 33889 / DSM 1251)).